We begin with the raw amino-acid sequence, 600 residues long: Long-chain-fatty-acid--CoA ligase FadD15 (600 aa).

It belongs to the ATP-dependent AMP-binding enzyme family.

It catalyses the reaction a long-chain fatty acid + ATP + CoA = a long-chain fatty acyl-CoA + AMP + diphosphate. The enzyme catalyses dodecanoate + ATP + CoA = dodecanoyl-CoA + AMP + diphosphate. The catalysed reaction is hexadecanoate + ATP + CoA = hexadecanoyl-CoA + AMP + diphosphate. It participates in lipid metabolism; fatty acid biosynthesis. Catalyzes the activation of long-chain fatty acids as acyl-coenzyme A (acyl-CoA), which are then transferred to the multifunctional polyketide synthase (PKS) type III for further chain extension. The protein is Long-chain-fatty-acid--CoA ligase FadD15 (fadD15) of Mycobacterium tuberculosis (strain ATCC 25618 / H37Rv).